Here is a 131-residue protein sequence, read N- to C-terminus: MKKTPLLNSSICEVVSKMGHTDMIAIGDSGLPIPDDTKRIDLALIKGVPTFMQTLKAVLLEQQVEEVIIAHETKEVSPETFENIKKEIGDVKITFISHEELKKELSNCKAVIRTGEQTPYANIILKSGVVF.

The Proton donor role is filled by H20. Substrate contacts are provided by residues D28, H98, and 120-122 (YAN).

It belongs to the RbsD / FucU family. RbsD subfamily. In terms of assembly, homodecamer.

It is found in the cytoplasm. It catalyses the reaction beta-D-ribopyranose = beta-D-ribofuranose. It participates in carbohydrate metabolism; D-ribose degradation; D-ribose 5-phosphate from beta-D-ribopyranose: step 1/2. Catalyzes the interconversion of beta-pyran and beta-furan forms of D-ribose. This is D-ribose pyranase from Clostridium novyi (strain NT).